Here is a 68-residue protein sequence, read N- to C-terminus: Protein transport protein Sec61 subunit gamma (68 aa).

Residues 1-32 (MDQIMQFVEPSRQFVKDSIRLVKRCTKPDRKE) lie on the Cytoplasmic side of the membrane. Residues 33-61 (FQKIAMATAIGFAIMGFIGFFVKLIHIPI) traverse the membrane as a helical segment. Over 62 to 68 (NNIIVGG) the chain is Extracellular.

This sequence belongs to the SecE/SEC61-gamma family. The SEC61 channel-forming translocon complex consists of channel-forming core components SEC61A1, SEC61B and SEC61G and different auxiliary components such as SEC62 and SEC63. The SEC61 channel associates with the multi-pass translocon (MPT) complex.

The protein resides in the endoplasmic reticulum membrane. Component of SEC61 channel-forming translocon complex that mediates transport of signal peptide-containing precursor polypeptides across the endoplasmic reticulum (ER). Forms a ribosome receptor and a gated pore in the ER membrane, both functions required for cotranslational translocation of nascent polypeptides. The SEC61 channel is also involved in ER membrane insertion of transmembrane proteins: it mediates membrane insertion of the first few transmembrane segments of proteins, while insertion of subsequent transmembrane regions of multi-pass membrane proteins is mediated by the multi-pass translocon (MPT) complex. The sequence is that of Protein transport protein Sec61 subunit gamma (sec61g) from Gadus morhua (Atlantic cod).